An 878-amino-acid polypeptide reads, in one-letter code: MARGLVSSLLLGQLLLVLVGLFSPAGAVPTPQYQTPNTQASSYWLSSIKRQGIAPFNGGGAGYKVFRNVKDFGAKGDGSSDDTAAINMAISSGSRCGKGCDSSTTTPALVYFPPGTYVVSKPIIQYYYTQIVGDALNMPVIKAAPSFEGIAVIDSDPYENDGSNWYTNQNNFFRGIRNLVIDLTGLDKSKGACIHWQVAQASSLQNIRFEMVKGGGDANKQIGIFMDNGSGGFMTDLVFNGGNYGAFFGNQQFTTRNLTFNNCNTAIFMNWNWAWTFKSLSVNDCGVALNMSNGGFNQTVGSVMILDSKIKNTPKGVVTSFNAESVPESGGTLILDNVDFTGSTDAVTSLQGSSIVGGGSVIKHWVQGNAWTAGSGSKAKRLPPQVQAKPDVARRDDCPAPAPQPPAQSTAPPYPIPETGEPTRVPTTEPSNVPTRVPTGGVPSGTTGTAPSTPSPSPTGGPTACPSAPVTKARVQTALPQPSKPAILLDKSGKVFERAKPQYENVSADKFLSVKSAGAKGDGKTDDTKAIQAVLDKATADQIVYFDHGAYLITSTIKVPKNIKITGEIWPMLMATGKAFSDMKNPIPMLQVGQPGDKGNVELSELIVTTQGSAPGCILVEWNVAEETQGSVGMWDVHFRVGGFAGTQLQSNTCAKTPNTTTTPDPKCFGAFMLLHITKTASAYLENTWLWVSDHELDLADHGQINIYNGRGALIESSGAVWMYGTASEHNTLYNYQIQNAKNVYMALIQTETPYYQSNPDALVPFAPDTKYNDPTFGDCTTAACKKAWGLRILNSTDVFLFGGGLYSFFENYKQECLKTESCQLNMIEVLCSETYLYGVSTKASTNMITSGGKGLVPQKENRSNFCSTIALFHQGNL.

A signal peptide spans 1–27 (MARGLVSSLLLGQLLLVLVGLFSPAGA). Residues Asn-228, Asn-257, Asn-290, and Asn-297 are each glycosylated (N-linked (GlcNAc...) asparagine). The disordered stretch occupies residues 373–472 (AGSGSKAKRL…TACPSAPVTK (100 aa)). Pro residues predominate over residues 400-416 (APAPQPPAQSTAPPYPI). Residues 433 to 452 (VPTRVPTGGVPSGTTGTAPS) show a composition bias toward low complexity. Residues Asn-505, Asn-659, Asn-795, and Asn-862 are each glycosylated (N-linked (GlcNAc...) asparagine).

Belongs to the glycosyl hydrolase 55 family.

Its subcellular location is the secreted. It catalyses the reaction Hydrolysis of (1-&gt;3)-beta-D-glucosidic linkages in (1-&gt;3)-beta-D-glucans.. Its function is as follows. Probable glucan endo-1,3-beta-glucosidase involved in the hydrolysis of fungal cell wall. Classified as a small-oligosaccharide-producing type based its the end products: glucose, laminaribiose or laminaritetraose. In Arthroderma benhamiae (strain ATCC MYA-4681 / CBS 112371) (Trichophyton mentagrophytes), this protein is Probable glucan endo-1,3-beta-glucosidase ARB_02077.